The primary structure comprises 324 residues: HTH-type transcriptional regulator CysB (324 aa).

In terms of domain architecture, HTH lysR-type spans 1 to 59 (MKLQQLRYIVEVVNHNLNVSSTAEGLYTSQPGISKQVRMLEDELGIQIFARSGKHLTQV). A DNA-binding region (H-T-H motif) is located at residues 19 to 38 (VSSTAEGLYTSQPGISKQVR).

Belongs to the LysR transcriptional regulatory family. Homotetramer.

It is found in the cytoplasm. This protein is a positive regulator of gene expression for the cysteine regulon, a system of 10 or more loci involved in the biosynthesis of L-cysteine from inorganic sulfate. The inducer for CysB is N-acetylserine. CysB inhibits its own transcription. The chain is HTH-type transcriptional regulator CysB (cysB) from Salmonella typhimurium (strain LT2 / SGSC1412 / ATCC 700720).